The primary structure comprises 364 residues: Cobalt-precorrin-5B C(1)-methyltransferase (364 aa).

Belongs to the CbiD family.

It carries out the reaction Co-precorrin-5B + S-adenosyl-L-methionine = Co-precorrin-6A + S-adenosyl-L-homocysteine. The protein operates within cofactor biosynthesis; adenosylcobalamin biosynthesis; cob(II)yrinate a,c-diamide from sirohydrochlorin (anaerobic route): step 6/10. Functionally, catalyzes the methylation of C-1 in cobalt-precorrin-5B to form cobalt-precorrin-6A. The polypeptide is Cobalt-precorrin-5B C(1)-methyltransferase (Pseudomonas putida (strain ATCC 47054 / DSM 6125 / CFBP 8728 / NCIMB 11950 / KT2440)).